The sequence spans 338 residues: STEAP1 protein (338 aa).

Helical transmembrane passes span 70–90 (WHLP…YTLL) and 118–138 (PMVS…AAIV). Positions 117-264 (LPMVSITLLA…TLGIVSLLLG (148 aa)) constitute a Ferric oxidoreductase domain. Residues glutamine 139 and arginine 160 each contribute to the FAD site. 4 helical membrane passes run 163 to 183 (FGLL…SYPM), 217 to 237 (IYVS…VTSI), 252 to 272 (IQST…LIFA), and 290 to 310 (FMIA…LLLP). Residue histidine 174 participates in heme b binding. The FAD site is built by serine 236 and glutamine 253. Residue histidine 267 participates in heme b binding.

The protein belongs to the STEAP family. Homotrimer. It depends on FAD as a cofactor. Requires heme b as cofactor.

It is found in the endosome membrane. Its subcellular location is the cell membrane. Does not function as a metalloreductase due to the absence of binding sites for the electron-donating substrate NADPH. This Sus scrofa (Pig) protein is STEAP1 protein (STEAP1).